We begin with the raw amino-acid sequence, 637 residues long: Chaperone protein HtpG (637 aa).

The tract at residues 1–328 is a; substrate-binding; sequence MADIEELKFD…SSDLPLNISR (328 aa). A b region spans residues 329-556; sequence ETLQNNRIVE…DNSMDIRMER (228 aa). Residues 488-508 form a disordered region; sequence IGASDDSGDKTSEDSGESASD. Positions 494–508 are enriched in basic and acidic residues; the sequence is SGDKTSEDSGESASD. The tract at residues 557–637 is c; that stretch reads FLREQKQLNY…GVLAKIFSSK (81 aa).

Belongs to the heat shock protein 90 family. As to quaternary structure, homodimer.

It localises to the cytoplasm. Functionally, molecular chaperone. Has ATPase activity. This Anaplasma phagocytophilum (strain HZ) protein is Chaperone protein HtpG.